A 338-amino-acid polypeptide reads, in one-letter code: Lipoate-protein ligase A (338 aa).

The BPL/LPL catalytic domain occupies 29–216 (PATQRVLFLW…AFFAHYGERV (188 aa)). ATP-binding positions include R71, 76–79 (GAVF), and K134. K134 is a (R)-lipoate binding site.

It belongs to the LplA family. In terms of assembly, monomer.

The protein localises to the cytoplasm. The enzyme catalyses L-lysyl-[lipoyl-carrier protein] + (R)-lipoate + ATP = N(6)-[(R)-lipoyl]-L-lysyl-[lipoyl-carrier protein] + AMP + diphosphate + H(+). The protein operates within protein modification; protein lipoylation via exogenous pathway; protein N(6)-(lipoyl)lysine from lipoate: step 1/2. It participates in protein modification; protein lipoylation via exogenous pathway; protein N(6)-(lipoyl)lysine from lipoate: step 2/2. Catalyzes both the ATP-dependent activation of exogenously supplied lipoate to lipoyl-AMP and the transfer of the activated lipoyl onto the lipoyl domains of lipoate-dependent enzymes. This is Lipoate-protein ligase A from Escherichia coli O8 (strain IAI1).